The chain runs to 771 residues: Caldesmon (771 aa).

Disordered regions lie at residues 23–91 and 104–599; these read ERLS…ALLE and LQEA…FSPK. Residues 26 to 199 are myosin and calmodulin-binding; it reads SYQRNDDDEE…PKEVPTEENQ (174 aa). Phosphotyrosine is present on tyrosine 27. Basic and acidic residues-rich tracts occupy residues 47 to 67, 104 to 115, 139 to 155, 170 to 194, 203 to 215, 240 to 435, 442 to 484, 509 to 518, and 525 to 592; these read QERL…EKSE, LQEALERQKEFD, ITGK…RCEI, WRQD…KEVP, AVEK…EVVE, AADK…ESLP, SKKD…RELT, GSEKLKEKQQ, and DELK…EKKP. Tandem repeats lie at residues 251–265, 266–278, 279–291, 294–306, 309–321, 324–336, 337–349, 350–362, 363–375, and 378–390. The interval 251–390 is 10 X 13 AA approximate tandem repeats; it reads EREKLEAEEK…KRAAEEKARL (140 aa). Residues 523-580 form a tropomyosin-binding region; it reads ELDELKKRREERRKILEEEEQKKKQEEAERKIREEEEKKRMKEEIERRRAEAAEKRQK. Phosphoserine; by CDK1 is present on serine 597. The strong actin-binding stretch occupies residues 612 to 644; that stretch reads LNKSAQKSGMKPAHTTAVVSKIDSRLEQYTSAV. Positions 622–632 are tropomyosin-binding; the sequence is KPAHTTAVVSK. Tyrosine 640 carries the post-translational modification Phosphotyrosine. The segment at 674-680 is calmodulin-binding; the sequence is WEKGNVF. The interval 676 to 771 is disordered; that stretch reads KGNVFSSPGG…NGLRQFEKEP (96 aa). Positions 679 to 691 are enriched in polar residues; that stretch reads VFSSPGGTGTPNK. Phosphoserine; by CDK1 is present on serine 682. Threonine 688 and threonine 711 each carry phosphothreonine; by CDK1. Serine 717 carries the post-translational modification Phosphoserine; by CDK1. Basic and acidic residues predominate over residues 723–742; it reads SDLRPGDVSGKRNLWEKQSV. The interval 726-752 is weak actin-binding; it reads RPGDVSGKRNLWEKQSVEKPAASSSKV.

It belongs to the caldesmon family. Phosphorylated in non-muscle cells. Phosphorylation by CDK1 during mitosis causes caldesmon to dissociate from microfilaments. Phosphorylation reduces caldesmon binding to actin, myosin, and calmodulin as well as its inhibition of actomyosin ATPase activity. Phosphorylation also occurs in both quiescent and dividing smooth muscle cells with similar effects on the interaction with actin and calmodulin and on microfilaments reorganization. As to expression, high-molecular-weight caldesmon (h-caldesmon) is predominantly expressed in smooth muscles, whereas low-molecular-weight caldesmon (l-caldesmon) is widely distributed in non-muscle tissues and cells. Not expressed in skeletal muscle or heart.

It localises to the cytoplasm. The protein resides in the cytoskeleton. The protein localises to the myofibril. It is found in the stress fiber. Actin- and myosin-binding protein implicated in the regulation of actomyosin interactions in smooth muscle and nonmuscle cells (could act as a bridge between myosin and actin filaments). Stimulates actin binding of tropomyosin which increases the stabilization of actin filament structure. In muscle tissues, inhibits the actomyosin ATPase by binding to F-actin. This inhibition is attenuated by calcium-calmodulin and is potentiated by tropomyosin. Interacts with actin, myosin, two molecules of tropomyosin and with calmodulin. Also plays an essential role during cellular mitosis and receptor capping. The polypeptide is Caldesmon (CALD1) (Gallus gallus (Chicken)).